Reading from the N-terminus, the 218-residue chain is NADH-ubiquinone oxidoreductase 21 kDa subunit, mitochondrial (218 aa).

A mitochondrion-targeting transit peptide spans 1-33 (MSALRITTASAARMLRTSNAMMPSVMGAAQRRA). Residues 31-74 (RRALSDSAEPARVPSVESARVPEKLAKEDSPLATPKRNSPDYNV) are disordered. Over residues 50 to 60 (RVPEKLAKEDS) the composition is skewed to basic and acidic residues.

This sequence belongs to the complex I NDUFS4 subunit family. Complex I is composed of about 40 different subunits. This is a component of the iron-sulfur (IP) fragment of the enzyme.

The protein resides in the mitochondrion inner membrane. Accessory subunit of the mitochondrial membrane respiratory chain NADH dehydrogenase (Complex I), that is believed not to be involved in catalysis. Complex I functions in the transfer of electrons from NADH to the respiratory chain. The immediate electron acceptor for the enzyme is believed to be ubiquinone. In Neurospora crassa (strain ATCC 24698 / 74-OR23-1A / CBS 708.71 / DSM 1257 / FGSC 987), this protein is NADH-ubiquinone oxidoreductase 21 kDa subunit, mitochondrial (nuo-21).